The primary structure comprises 339 residues: NADH-quinone oxidoreductase subunit H (339 aa).

The next 9 membrane-spanning stretches (helical) occupy residues 9–29, 50–70, 82–102, 115–135, 161–181, 187–207, 235–255, 275–295, and 311–331; these read IFPL…LILC, PNVV…KLLF, ILFI…WAVI, VGVL…IIAG, MGLV…SEII, MPWW…ISVL, MGFA…SAMT, IPGF…FLWI, and GWKV…SVLV.

Belongs to the complex I subunit 1 family. In terms of assembly, NDH-1 is composed of 14 different subunits. Subunits NuoA, H, J, K, L, M, N constitute the membrane sector of the complex.

The protein localises to the cell membrane. The enzyme catalyses a quinone + NADH + 5 H(+)(in) = a quinol + NAD(+) + 4 H(+)(out). NDH-1 shuttles electrons from NADH, via FMN and iron-sulfur (Fe-S) centers, to quinones in the respiratory chain. The immediate electron acceptor for the enzyme in this species is believed to be ubiquinone. Couples the redox reaction to proton translocation (for every two electrons transferred, four hydrogen ions are translocated across the cytoplasmic membrane), and thus conserves the redox energy in a proton gradient. This subunit may bind ubiquinone. In Rickettsia africae (strain ESF-5), this protein is NADH-quinone oxidoreductase subunit H.